A 243-amino-acid chain; its full sequence is Phosphoadenosine 5'-phosphosulfate reductase (243 aa).

Catalysis depends on Cys-239, which acts as the Nucleophile; cysteine thiosulfonate intermediate.

It belongs to the PAPS reductase family. CysH subfamily.

It is found in the cytoplasm. It catalyses the reaction [thioredoxin]-disulfide + sulfite + adenosine 3',5'-bisphosphate + 2 H(+) = [thioredoxin]-dithiol + 3'-phosphoadenylyl sulfate. The protein operates within sulfur metabolism; hydrogen sulfide biosynthesis; sulfite from sulfate: step 3/3. Catalyzes the formation of sulfite from phosphoadenosine 5'-phosphosulfate (PAPS) using thioredoxin as an electron donor. The sequence is that of Phosphoadenosine 5'-phosphosulfate reductase from Proteus mirabilis (strain HI4320).